The primary structure comprises 122 residues: Large ribosomal subunit protein uL14 (122 aa).

Belongs to the universal ribosomal protein uL14 family. In terms of assembly, part of the 50S ribosomal subunit. Forms a cluster with proteins L3 and L19. In the 70S ribosome, L14 and L19 interact and together make contacts with the 16S rRNA in bridges B5 and B8.

Binds to 23S rRNA. Forms part of two intersubunit bridges in the 70S ribosome. This Streptococcus gordonii (strain Challis / ATCC 35105 / BCRC 15272 / CH1 / DL1 / V288) protein is Large ribosomal subunit protein uL14.